Reading from the N-terminus, the 143-residue chain is Transcription antitermination protein NusB (143 aa).

Belongs to the NusB family.

Involved in transcription antitermination. Required for transcription of ribosomal RNA (rRNA) genes. Binds specifically to the boxA antiterminator sequence of the ribosomal RNA (rrn) operons. The sequence is that of Transcription antitermination protein NusB from Anaeromyxobacter sp. (strain Fw109-5).